We begin with the raw amino-acid sequence, 389 residues long: Serpentine receptor class alpha/beta-14 (389 aa).

Residues 1 to 45 (MPSDDFVKTARKALISHSVSIQNYTEDDCQIAFHATTNSFMQTIR) lie on the Extracellular side of the membrane. N-linked (GlcNAc...) asparagine glycosylation occurs at asparagine 23. A helical membrane pass occupies residues 46–66 (LVHIFFCTFGAISSSLFIYVL). Residues 67–81 (LNSSSRNLHRNLRIS) are Cytoplasmic-facing. The chain crosses the membrane as a helical span at residues 82 to 102 (LASLAFAALIACLQLDFIAFY). The Extracellular portion of the chain corresponds to 103–123 (HLALTLTADNACDSMYEARKC). A disulfide bridge connects residues cysteine 123 and cysteine 198. Residues 124-144 (AILRFPVVLSIYATLCGIIVL) traverse the membrane as a helical segment. The Cytoplasmic portion of the chain corresponds to 145–167 (AIERTIATLKYKTYEANGSRVVG). A helical membrane pass occupies residues 168-188 (LVLVTGQWFVCIIVAVFSVLL). Residues 189–208 (RSDPGYVHYCTAYVSHPRTS) lie on the Extracellular side of the membrane. The chain crosses the membrane as a helical span at residues 209–229 (VFSLCFMSALEVATLVYFVLL). Residues 230–268 (LQSNQRRQVNEFVNKAMHSLSERYQLQENVRIMKILIPS) lie on the Cytoplasmic side of the membrane. Residues 269-289 (ITVHAILGFIGLGSMLAFAII) traverse the membrane as a helical segment. Residues 290–303 (YRYADERLIVGFAP) are Extracellular-facing. A helical membrane pass occupies residues 304 to 324 (FSEVVLLVIPIYAVVFPIVAV). The Cytoplasmic portion of the chain corresponds to 325–389 (VQNKQLRLAS…FDLLNEMWKK (65 aa)).

Belongs to the nematode receptor-like protein srab family.

The protein resides in the membrane. This Caenorhabditis elegans protein is Serpentine receptor class alpha/beta-14.